A 423-amino-acid polypeptide reads, in one-letter code: Maltoporin 1 (423 aa).

The signal sequence occupies residues 1-23 (MNTTLRALSVALAAALIAPSAFA).

Belongs to the porin LamB (TC 1.B.3) family. In terms of assembly, homotrimer formed of three 18-stranded antiparallel beta-barrels, containing three independent channels.

Its subcellular location is the cell outer membrane. It catalyses the reaction beta-maltose(in) = beta-maltose(out). Involved in the transport of maltose and maltodextrins. In Klebsiella pneumoniae subsp. pneumoniae (strain ATCC 700721 / MGH 78578), this protein is Maltoporin 1.